A 194-amino-acid chain; its full sequence is Peroxynitrite isomerase 1 (194 aa).

The GXWXGXG motif lies at 40 to 46 (GVWRGEG). Residues Lys-157 and His-184 each contribute to the heme b site.

It belongs to the nitrobindin family. In terms of assembly, homodimer. Heme b is required as a cofactor.

It carries out the reaction peroxynitrite = nitrate. The protein operates within nitrogen metabolism. Heme-binding protein able to scavenge peroxynitrite and to protect free L-tyrosine against peroxynitrite-mediated nitration, by acting as a peroxynitrite isomerase that converts peroxynitrite to nitrate. Therefore, this protein likely plays a role in peroxynitrite sensing and in the detoxification of reactive nitrogen and oxygen species (RNS and ROS, respectively). Is able to bind nitric oxide (NO) in vitro, but may act as a sensor of peroxynitrite levels in vivo. The sequence is that of Peroxynitrite isomerase 1 from Mycobacterium ulcerans (strain Agy99).